We begin with the raw amino-acid sequence, 330 residues long: Aspartate--ammonia ligase (330 aa).

It belongs to the class-II aminoacyl-tRNA synthetase family. AsnA subfamily.

Its subcellular location is the cytoplasm. The enzyme catalyses L-aspartate + NH4(+) + ATP = L-asparagine + AMP + diphosphate + H(+). It participates in amino-acid biosynthesis; L-asparagine biosynthesis; L-asparagine from L-aspartate (ammonia route): step 1/1. The chain is Aspartate--ammonia ligase from Escherichia coli O139:H28 (strain E24377A / ETEC).